Here is a 248-residue protein sequence, read N- to C-terminus: 3-deoxy-manno-octulosonate cytidylyltransferase (248 aa).

Belongs to the KdsB family.

The protein resides in the cytoplasm. It carries out the reaction 3-deoxy-alpha-D-manno-oct-2-ulosonate + CTP = CMP-3-deoxy-beta-D-manno-octulosonate + diphosphate. It functions in the pathway nucleotide-sugar biosynthesis; CMP-3-deoxy-D-manno-octulosonate biosynthesis; CMP-3-deoxy-D-manno-octulosonate from 3-deoxy-D-manno-octulosonate and CTP: step 1/1. It participates in bacterial outer membrane biogenesis; lipopolysaccharide biosynthesis. Activates KDO (a required 8-carbon sugar) for incorporation into bacterial lipopolysaccharide in Gram-negative bacteria. The chain is 3-deoxy-manno-octulosonate cytidylyltransferase from Salmonella arizonae (strain ATCC BAA-731 / CDC346-86 / RSK2980).